The primary structure comprises 452 residues: Acetyl-CoA decarbonylase/synthase complex subunit delta (452 aa).

Belongs to the CdhD family. Heterodimer of delta and gamma chains. The ACDS complex is made up of alpha, epsilon, beta, gamma and delta chains with a probable stoichiometry of (alpha(2)epsilon(2))(4)-beta(8)-(gamma(1)delta(1))(8).

Part of a complex that catalyzes the reversible cleavage of acetyl-CoA, allowing autotrophic growth from CO(2). Probably maintains the overall quaternary structure of the ACDS complex. The polypeptide is Acetyl-CoA decarbonylase/synthase complex subunit delta (Archaeoglobus fulgidus (strain ATCC 49558 / DSM 4304 / JCM 9628 / NBRC 100126 / VC-16)).